A 619-amino-acid chain; its full sequence is Probable pectinesterase/pectinesterase inhibitor 25 (619 aa).

The N-terminal stretch at 1 to 23 (MKMQTLNFTSSLLFLSFIFLSCA) is a signal peptide. Positions 31–84 (SPSQPHSEPPSQLPFEPPVESPFFPPSQPPIFVPPSQPPSLPPSQSQSPSLACK) are disordered. Residues 37 to 72 (SEPPSQLPFEPPVESPFFPPSQPPIFVPPSQPPSLP) show a composition bias toward pro residues. The interval 73 to 231 (PSQSQSPSLA…TRLYSISLGL (159 aa)) is pectinesterase inhibitor 25. N-linked (GlcNAc...) asparagine glycosylation is found at N220, N255, N312, N325, and N364. The pectinesterase 25 stretch occupies residues 302–601 (AVIVGPFKSD…FTVYNFTMGD (300 aa)). T380 serves as a coordination point for substrate. The N-linked (GlcNAc...) asparagine glycan is linked to N382. Q410 is a substrate binding site. The Proton donor; for pectinesterase activity role is filled by D433. A disulfide bridge links C447 with C467. D454 functions as the Nucleophile; for pectinesterase activity in the catalytic mechanism. N500 carries N-linked (GlcNAc...) asparagine glycosylation. Substrate contacts are provided by R522 and W524. N-linked (GlcNAc...) asparagine glycans are attached at residues N550, N591, and N596.

This sequence in the N-terminal section; belongs to the PMEI family. In the C-terminal section; belongs to the pectinesterase family. Expressed in siliques.

The protein resides in the secreted. It localises to the cell wall. It carries out the reaction [(1-&gt;4)-alpha-D-galacturonosyl methyl ester](n) + n H2O = [(1-&gt;4)-alpha-D-galacturonosyl](n) + n methanol + n H(+). The protein operates within glycan metabolism; pectin degradation; 2-dehydro-3-deoxy-D-gluconate from pectin: step 1/5. Acts in the modification of cell walls via demethylesterification of cell wall pectin. The sequence is that of Probable pectinesterase/pectinesterase inhibitor 25 (PME25) from Arabidopsis thaliana (Mouse-ear cress).